Here is a 451-residue protein sequence, read N- to C-terminus: 23S rRNA (uracil(1939)-C(5))-methyltransferase RlmD (451 aa).

The 59-residue stretch at 20 to 78 folds into the TRAM domain; that stretch reads QIPAGKKQRLTIERLSDDGRGIAFLEGKTWFVAGSLAGEEVEARVLNARGKVVEARTER. 4 residues coordinate [4Fe-4S] cluster: C91, C97, C100, and C179. S-adenosyl-L-methionine-binding residues include Q283, F312, N317, E333, D360, and D381. C407 (nucleophile) is an active-site residue.

It belongs to the class I-like SAM-binding methyltransferase superfamily. RNA M5U methyltransferase family. RlmD subfamily.

It carries out the reaction uridine(1939) in 23S rRNA + S-adenosyl-L-methionine = 5-methyluridine(1939) in 23S rRNA + S-adenosyl-L-homocysteine + H(+). Its function is as follows. Catalyzes the formation of 5-methyl-uridine at position 1939 (m5U1939) in 23S rRNA. In Pseudomonas savastanoi pv. phaseolicola (strain 1448A / Race 6) (Pseudomonas syringae pv. phaseolicola (strain 1448A / Race 6)), this protein is 23S rRNA (uracil(1939)-C(5))-methyltransferase RlmD.